The sequence spans 469 residues: GTPase Der (469 aa).

2 consecutive EngA-type G domains span residues 30–193 (PVLA…PEVA) and 203–376 (RRVA…ASWD). GTP is bound by residues 36–43 (GRPNVGKS), 83–87 (DTGGW), 145–148 (NKVD), 209–216 (GKPNVGKS), 256–260 (DTAGL), and 321–324 (NKWD). One can recognise a KH-like domain in the interval 377–459 (TRIPTGPLNS…PIRINVRVRE (83 aa)).

The protein belongs to the TRAFAC class TrmE-Era-EngA-EngB-Septin-like GTPase superfamily. EngA (Der) GTPase family. Associates with the 50S ribosomal subunit.

In terms of biological role, GTPase that plays an essential role in the late steps of ribosome biogenesis. The chain is GTPase Der from Mycobacterium marinum (strain ATCC BAA-535 / M).